Consider the following 433-residue polypeptide: Sulfhydrylase FUB7 (433 aa).

Lys211 is modified (N6-(pyridoxal phosphate)lysine).

Belongs to the trans-sulfuration enzymes family. Pyridoxal 5'-phosphate serves as cofactor.

The protein operates within mycotoxin biosynthesis. In terms of biological role, sulfhydrylase; part of the gene cluster that mediates the biosynthesis of fusaric acid, a mycotoxin with low to moderate toxicity to animals and humans, but with high phytotoxic properties. L-aspartate is suggested as fusaric acid amino acid precursor that is activated and further processed to O-acetyl-L-homoserine by cluster enzymes aspartate kinase FUB3 and homoserine O-acetyltransferase FUB5, as well as enzymes of the primary metabolism. The polyketide synthase (PKS) FUB1 generates the triketide trans-2-hexenal which is presumptively released by the hydrolase FUB4 and linked to the NRPS-bound amino acid precursor by NAD(P)-dependent dehydrogenase FUB6. FUB1, FUB4, and the non-canonical NRPS Fub8 may form an enzyme complex. Further processing of the NRPS-bound intermediate might be carried out by FUB6 and the O-acetylhomoserine FUB7, enabling a spontaneous electrocyclization to close the carbon backbone of fusaric acid. Dihydrofusaric acid is likely to be released via reduction by the thioester reductase (TR) domain of FUB8 whereupon the final oxidation to fusaric acid may (also) be performed by the FMN-dependent dehydrogenase FUB9. The chain is Sulfhydrylase FUB7 from Gibberella moniliformis (strain M3125 / FGSC 7600) (Maize ear and stalk rot fungus).